The sequence spans 442 residues: NAD(P)H sulfur oxidoreductase (CoA-dependent) (442 aa).

Residue alanine 13 to alanine 14 participates in FAD binding. Arginine 24 contributes to the CoA binding site. Residues glutamate 35–alanine 36 and histidine 42–proline 44 contribute to the FAD site. Residues serine 41 to cysteine 45, histidine 62 to tyrosine 63, and arginine 72 each bind CoA. Cysteine 45 functions as the Redox-active in the catalytic mechanism. Positions 82, 280, and 298 each coordinate FAD. CoA is bound by residues asparagine 302 and lysine 358. Position 422 (tyrosine 422) interacts with FAD. CoA contacts are provided by tryptophan 430 and arginine 438.

It belongs to the class-III pyridine nucleotide-disulfide oxidoreductase family. In terms of assembly, homodimer. FAD serves as cofactor.

The protein localises to the cytoplasm. The catalysed reaction is hydrogen sulfide + NADP(+) = sulfur + NADPH. It catalyses the reaction hydrogen sulfide + NAD(+) = sulfur + NADH. The enzyme catalyses NADP(+) + 2 CoA = CoA-disulfide + NADPH + H(+). It carries out the reaction NAD(+) + 2 CoA = CoA-disulfide + NADH + H(+). Its function is as follows. Catalyzes the CoA-dependent reduction of elemental sulfur (S(0)) to produce hydrogen sulfide. Can use both NADPH and NADH, but shows a preference for NADPH. May enable S(0) to be used, via sulfide, for iron-sulfur cluster synthesis by SipA. Also shows coenzyme A disulfide reductase (CoADR) activity with both NADH and NADPH. However, CoADR specific activity is about 20-fold lower than the sulfur reduction assay and CoADR activity appears to be an artifactual side reaction and is not thought to have any physiological relevance. Also shows NAD(P)H oxidase activity with both NADH and NADPH. The sequence is that of NAD(P)H sulfur oxidoreductase (CoA-dependent) from Pyrococcus furiosus (strain ATCC 43587 / DSM 3638 / JCM 8422 / Vc1).